The primary structure comprises 63 residues: Prokaryotic ubiquitin-like protein Pup (63 aa).

Residues 1–11 (MAQEQTRRGGG) show a composition bias toward basic and acidic residues. The segment at 1 to 36 (MAQEQTRRGGGGDDDEFTSSTSVGQERREKLTEETD) is disordered. Positions 20–57 (STSVGQERREKLTEETDDLLDEIDDVLEENAEDFVRAY) are ARC ATPase binding. Positions 23 to 51 (VGQERREKLTEETDDLLDEIDDVLEENAE) form a coiled coil. Glutamine 63 is subject to Deamidated glutamine. Residue glutamine 63 forms an Isoglutamyl lysine isopeptide (Gln-Lys) (interchain with K-? in acceptor proteins) linkage.

The protein belongs to the prokaryotic ubiquitin-like protein family. In terms of assembly, strongly interacts with the proteasome-associated ATPase ARC through a hydrophobic interface; the interacting region of Pup lies in its C-terminal half. There is one Pup binding site per ARC hexamer ring. In terms of processing, is modified by deamidation of its C-terminal glutamine to glutamate by the deamidase Dop, a prerequisite to the subsequent pupylation process.

It functions in the pathway protein degradation; proteasomal Pup-dependent pathway. In terms of biological role, protein modifier that is covalently attached to lysine residues of substrate proteins, thereby targeting them for proteasomal degradation. The tagging system is termed pupylation. The protein is Prokaryotic ubiquitin-like protein Pup of Mycobacterium leprae (strain Br4923).